We begin with the raw amino-acid sequence, 258 residues long: Tryptophan synthase alpha chain (258 aa).

Residues E52 and D63 each act as proton acceptor in the active site.

Belongs to the TrpA family. Tetramer of two alpha and two beta chains.

The catalysed reaction is (1S,2R)-1-C-(indol-3-yl)glycerol 3-phosphate + L-serine = D-glyceraldehyde 3-phosphate + L-tryptophan + H2O. Its pathway is amino-acid biosynthesis; L-tryptophan biosynthesis; L-tryptophan from chorismate: step 5/5. The alpha subunit is responsible for the aldol cleavage of indoleglycerol phosphate to indole and glyceraldehyde 3-phosphate. The sequence is that of Tryptophan synthase alpha chain from Streptococcus pneumoniae serotype 2 (strain D39 / NCTC 7466).